Here is a 427-residue protein sequence, read N- to C-terminus: Male abnormal protein mab-31 (427 aa).

A disordered region spans residues 68–102 (PIGTGRFPNPSPPRSSSGTNTPIRKTPGSRPDRGK).

The protein localises to the nucleus. Functionally, putative transcription factor. Acts in a TGF-beta-like pathway during development of male-specific genital sensilla (simple sense organs), known as rays. Involved in production of reactive oxygen species (ROS), acting downstream of the TGF-beta-like dbl-1 signaling pathway. Involved in locomotory behavior. This is Male abnormal protein mab-31 from Caenorhabditis elegans.